We begin with the raw amino-acid sequence, 602 residues long: Potassium voltage-gated channel subfamily A member 5 (602 aa).

Positions 1–107 (MEISLVPMEN…EDQAPQDSGS (107 aa)) are disordered. The tetramerization domain stretch occupies residues 1-202 (MEISLVPMEN…FYQLGDEAME (202 aa)). The Cytoplasmic segment spans residues 1–238 (MEISLVPMEN…LIFEYPESSG (238 aa)). Pro residues predominate over residues 66–78 (PLPPMPQELPQPR). Phosphoserine; by CK2 and PKA is present on Ser-81. Residue Lys-212 forms a Glycyl lysine isopeptide (Lys-Gly) (interchain with G-Cter in SUMO) linkage. A helical membrane pass occupies residues 239-260 (SARAIAIVSVLVILISIITFCL). Topologically, residues 261-314 (ETLPEFRDERELLRHPPVPPQPPAPAPGANGSGSGVLSSGPTVAPLLPRTLADP) are extracellular. A disordered region spans residues 274–297 (RHPPVPPQPPAPAPGANGSGSGVL). The span at 276-286 (PPVPPQPPAPA) shows a compositional bias: pro residues. Asn-290 carries N-linked (GlcNAc...) asparagine glycosylation. Residues 315 to 336 (FFIVETTCVIWFTFELLVRFFA) traverse the membrane as a helical segment. Cys-337 carries S-palmitoyl cysteine lipidation. Over 337 to 347 (CPSKAEFSRNI) the chain is Cytoplasmic. A helical transmembrane segment spans residues 348–368 (MNIIDIVAIFPYFITLGTELA). Over 369-384 (EQQPGGGGQNGQQAMS) the chain is Extracellular. A helical; Voltage-sensor membrane pass occupies residues 385–405 (LAILRVIRLVRVFRIFKLSRH). The Cytoplasmic segment spans residues 406–420 (SKGLQILGKTLQASM). An S4-S5 linker region spans residues 407-420 (KGLQILGKTLQASM). The chain crosses the membrane as a helical span at residues 421 to 442 (RELGLLIFFLFIGVILFSSAVY). Residues 443 to 456 (FAEADNQGSHFSSI) lie on the Extracellular side of the membrane. Residues 457-468 (PDAFWWAVVTMT) constitute an intramembrane region (helical). The short motif at 469–474 (TVGYGD) is the Selectivity filter element. An intramembrane segment occupies 469-476 (TVGYGDMR). Residues 477-483 (PITVGGK) are Extracellular-facing. The helical transmembrane segment at 484-512 (IVGSLCAIAGVLTIALPVPVIVSNFNYFY) threads the bilayer. At 513–602 (HRETDHEEQA…CLDTSRETDL (90 aa)) the chain is on the cytoplasmic side. Lys-525 is covalently cross-linked (Glycyl lysine isopeptide (Lys-Gly) (interchain with G-Cter in SUMO)). Phosphoserine; by PKA occurs at positions 535, 546, and 569. The short motif at 600–602 (TDL) is the PDZ-binding element.

Belongs to the potassium channel family. A (Shaker) (TC 1.A.1.2) subfamily. Kv1.5/KCNA5 sub-subfamily. In terms of assembly, homotetramer and heterotetramer of potassium channel proteins. Interacts with DLG1, which enhances channel currents. Forms a ternary complex with DLG1 and CAV3. Interacts with KCNAB1. Interacts with UBE2I. Interacts with XIRP2; the interaction is required for normal action potential configuration in the heart. In terms of processing, glycosylated. Sumoylated on Lys-212, and Lys-525, preferentially with SUMO3. Sumoylation regulates the voltage sensitivity of the channel. Expressed in the heart (at protein level). Expressed in the brain and weakly expressed in the thymus, skeletal muscle and spleen.

It localises to the cell membrane. It carries out the reaction K(+)(in) = K(+)(out). In terms of biological role, voltage-gated potassium channel that mediates transmembrane potassium transport in excitable membranes. Forms tetrameric potassium-selective channels through which potassium ions pass in accordance with their electrochemical gradient. The channel alternates between opened and closed conformations in response to the voltage difference across the membrane. Can form functional homotetrameric channels and heterotetrameric channels that contain variable proportions of KCNA1, KCNA2, KCNA4, KCNA5, and possibly other family members as well; channel properties depend on the type of alpha subunits that are part of the channel. Channel properties are modulated by cytoplasmic beta subunits that regulate the subcellular location of the alpha subunits and promote rapid inactivation. Homotetrameric channels display rapid activation and slow inactivation. Required for normal electrical conduction including formation of the infranodal ventricular conduction system and normal action potential configuration, as a result of its interaction with XIRP2. May play a role in regulating the secretion of insulin in normal pancreatic islets. Its function is as follows. Voltage-gated potassium channel that mediates transmembrane potassium transport in excitable membranes. Forms tetrameric potassium-selective channels through which potassium ions pass in accordance with their electrochemical gradient. The channel alternates between opened and closed conformations in response to the voltage difference across the membrane. Inactive. Inhibits expression of isoform 1 and isoform 2. This is Potassium voltage-gated channel subfamily A member 5 (Kcna5) from Mus musculus (Mouse).